A 377-amino-acid polypeptide reads, in one-letter code: Gap junction gamma-1 protein (377 aa).

The Cytoplasmic portion of the chain corresponds to 1 to 18; the sequence is MSWSFLTRLLEEINNHST. A helical membrane pass occupies residues 19–39; that stretch reads FVGKVWLTVLIIFRIVLTAVG. Over 40–75 the chain is Extracellular; the sequence is GESIYYDEQSKFTCNTQQPGCENVCYDAFAPLSHVR. Residues 76–96 traverse the membrane as a helical segment; it reads FWVFQIILITTPSIMYLGFAM. Over 97-174 the chain is Cytoplasmic; that stretch reads HRIARQPEMQ…RRIKQDGLMK (78 aa). Positions 129-163 are disordered; that stretch reads DYEEAEDNQEEDPMICEEEEPEKDSEKGDKKKHDG. The span at 131-151 shows a compositional bias: acidic residues; that stretch reads EEAEDNQEEDPMICEEEEPEK. A helical membrane pass occupies residues 175–197; the sequence is VYVLQLLFRSVFEVGFLMGQYIL. Residues 198-228 are Extracellular-facing; it reads YGFEVIPFFVCSRKPCPHTVDCFVSRPTEKT. Residues 229–249 form a helical membrane-spanning segment; it reads IFLLIMYAVSALCLFLNLCEL. Residues 250–377 lie on the Cytoplasmic side of the membrane; sequence FHLGIGGIRD…GVGNREKSGL (128 aa). Disordered regions lie at residues 265-294 and 334-377; these read KKELQESRKKTPSAPPNYHSVLKKGRLPNG and LNPT…KSGL. Polar residues predominate over residues 337-362; the sequence is TGDNTHASRSSSPESNSIAAEQNRLN.

This sequence belongs to the connexin family. Gamma-type subfamily. A connexon is composed of a hexamer of connexins.

The protein resides in the cell membrane. It localises to the cell junction. The protein localises to the gap junction. Its function is as follows. One gap junction consists of a cluster of closely packed pairs of transmembrane channels, the connexons, through which materials of low MW diffuse from one cell to a neighboring cell. The sequence is that of Gap junction gamma-1 protein (gjc1) from Xenopus tropicalis (Western clawed frog).